We begin with the raw amino-acid sequence, 471 residues long: UDP-N-acetylmuramoylalanine--D-glutamate ligase (471 aa).

Residue 123–129 (GTNGKST) participates in ATP binding.

It belongs to the MurCDEF family.

Its subcellular location is the cytoplasm. The catalysed reaction is UDP-N-acetyl-alpha-D-muramoyl-L-alanine + D-glutamate + ATP = UDP-N-acetyl-alpha-D-muramoyl-L-alanyl-D-glutamate + ADP + phosphate + H(+). It participates in cell wall biogenesis; peptidoglycan biosynthesis. In terms of biological role, cell wall formation. Catalyzes the addition of glutamate to the nucleotide precursor UDP-N-acetylmuramoyl-L-alanine (UMA). This chain is UDP-N-acetylmuramoylalanine--D-glutamate ligase, found in Caulobacter vibrioides (strain ATCC 19089 / CIP 103742 / CB 15) (Caulobacter crescentus).